Here is a 102-residue protein sequence, read N- to C-terminus: Small ribosomal subunit protein uS10 (102 aa).

This sequence belongs to the universal ribosomal protein uS10 family. Part of the 30S ribosomal subunit.

Functionally, involved in the binding of tRNA to the ribosomes. The sequence is that of Small ribosomal subunit protein uS10 from Rhizobium meliloti (strain 1021) (Ensifer meliloti).